The following is a 447-amino-acid chain: tRNA (guanine(37)-N(1))-methyltransferase (447 aa).

S-adenosyl-L-methionine is bound by residues His-241, 285–286 (DL), and 313–314 (DV).

Belongs to the class I-like SAM-binding methyltransferase superfamily. TRM5/TYW2 family. As to quaternary structure, monomer.

It localises to the mitochondrion matrix. The protein resides in the nucleus. It is found in the cytoplasm. It catalyses the reaction guanosine(37) in tRNA + S-adenosyl-L-methionine = N(1)-methylguanosine(37) in tRNA + S-adenosyl-L-homocysteine + H(+). In terms of biological role, specifically methylates the N1 position of guanosine-37 in various cytoplasmic and mitochondrial tRNAs. Methylation is not dependent on the nature of the nucleoside 5' of the target nucleoside. This is the first step in the biosynthesis of wybutosine (yW), a modified base adjacent to the anticodon of tRNAs and required for accurate decoding. The protein is tRNA (guanine(37)-N(1))-methyltransferase of Giardia intestinalis (strain ATCC 50803 / WB clone C6) (Giardia lamblia).